We begin with the raw amino-acid sequence, 130 residues long: Small ribosomal subunit protein uS9 (130 aa).

This sequence belongs to the universal ribosomal protein uS9 family.

The chain is Small ribosomal subunit protein uS9 from Desulfosudis oleivorans (strain DSM 6200 / JCM 39069 / Hxd3) (Desulfococcus oleovorans).